The primary structure comprises 418 residues: F-box/LRR-repeat protein 14 (418 aa).

The F-box domain maps to 2-48 (ETHISCLFPELLAMIFGYLDVRDKGRAAQVCTAWRDAAYHKSVWRGV). The required for down-regulation of SNAI1 stretch occupies residues 2–48 (ETHISCLFPELLAMIFGYLDVRDKGRAAQVCTAWRDAAYHKSVWRGV). LRR repeat units follow at residues 144 to 163 (GLEV…GLLL), 170 to 191 (RLKS…GHLA), 203 to 225 (GLEQ…HISR), 229 to 250 (GLRL…LHLS), and 254 to 275 (SLRS…MHLA).

Part of a SCF (SKP1-cullin-F-box) ubiquitin-protein ligase complex. Interacts with SKP1 and CUL1. Interacts with SNAI1; the interaction requires the phosphorylation of the two serine residues in the substrate destruction motif D-S-G-X(2,3,4)-S.

The protein localises to the cytoplasm. Its function is as follows. Substrate-recognition component of some SCF (SKP1-CUL1-F-box protein)-type E3 ubiquitin-protein ligase complexes. The SCF(FBXL14) complex acts by mediating ubiquitination and subsequent degradation of SNAI1. This chain is F-box/LRR-repeat protein 14 (FBXL14), found in Homo sapiens (Human).